The chain runs to 206 residues: MSKGSSTKKWLHEHTSDYYVIQANKLGYRSRASFKILEIQNKYQLFKPNMFVVDLGAAPGGWSEQVIKYIGKNGKLIALDLLEMAPIAGVEFIQGDFSSDETYQKLNTLVNNQKIDCVISDMAPNLSGNKTSDQAKSIYLLELALDFANTNLNKNGSFVAKVFQGQGSDEYLKLVRESFNKVIQFKPKSSRAKSREFYVIATEFKG.

S-adenosyl-L-methionine contacts are provided by glycine 60, tryptophan 62, aspartate 80, aspartate 96, and aspartate 121. Residue lysine 161 is the Proton acceptor of the active site.

Belongs to the class I-like SAM-binding methyltransferase superfamily. RNA methyltransferase RlmE family.

It localises to the cytoplasm. It carries out the reaction uridine(2552) in 23S rRNA + S-adenosyl-L-methionine = 2'-O-methyluridine(2552) in 23S rRNA + S-adenosyl-L-homocysteine + H(+). Specifically methylates the uridine in position 2552 of 23S rRNA at the 2'-O position of the ribose in the fully assembled 50S ribosomal subunit. This Francisella tularensis subsp. novicida (strain U112) protein is Ribosomal RNA large subunit methyltransferase E.